The chain runs to 362 residues: Adenosine deaminase (362 aa).

Positions 19 and 21 each coordinate Zn(2+). Residues histidine 21, aspartate 23, and glycine 181 each contribute to the substrate site. Histidine 208 lines the Zn(2+) pocket. The active-site Proton donor is the glutamate 211. Aspartate 300 lines the Zn(2+) pocket.

It belongs to the metallo-dependent hydrolases superfamily. Adenosine and AMP deaminases family. Adenosine deaminase subfamily. It depends on Zn(2+) as a cofactor.

The enzyme catalyses adenosine + H2O + H(+) = inosine + NH4(+). It catalyses the reaction 2'-deoxyadenosine + H2O + H(+) = 2'-deoxyinosine + NH4(+). Catalyzes the hydrolytic deamination of adenosine and 2-deoxyadenosine. In Mycobacterium marinum (strain ATCC BAA-535 / M), this protein is Adenosine deaminase.